A 267-amino-acid polypeptide reads, in one-letter code: tRNA pseudouridine synthase A (267 aa).

Asp51 acts as the Nucleophile in catalysis. Residue Tyr109 coordinates substrate.

Belongs to the tRNA pseudouridine synthase TruA family. As to quaternary structure, homodimer.

It catalyses the reaction uridine(38/39/40) in tRNA = pseudouridine(38/39/40) in tRNA. Functionally, formation of pseudouridine at positions 38, 39 and 40 in the anticodon stem and loop of transfer RNAs. The protein is tRNA pseudouridine synthase A of Staphylococcus aureus (strain bovine RF122 / ET3-1).